Consider the following 327-residue polypeptide: uncharacterized protein (327 aa).

A helical transmembrane segment spans residues 13-33 (IICIISIIVLLLIIISLYPHK).

The protein resides in the membrane. This is an uncharacterized protein from Caenorhabditis elegans.